We begin with the raw amino-acid sequence, 754 residues long: 17S U2 SnRNP complex component HTATSF1 (754 aa).

Disordered regions lie at residues methionine 1–aspartate 53 and glycine 81–serine 122. An N-acetylserine modification is found at serine 2. The segment covering glutamate 90–serine 122 has biased composition (basic and acidic residues). RRM domains are found at residues threonine 133–phenylalanine 218 and arginine 264–glycine 349. Positions arginine 259–tyrosine 353 are U2AF homology motif (UHM). Lysine 297 carries the post-translational modification N6-acetyllysine. The disordered stretch occupies residues arginine 380 to glutamate 415. The tract at residues glycine 381–isoleucine 754 is mediates interaction with the P-TEFb complex. 4 positions are modified to phosphoserine: serine 387, serine 403, serine 407, and serine 409. Polar residues predominate over residues histidine 405 to glutamate 415. Residues lysine 429 and lysine 430 each participate in a glycyl lysine isopeptide (Lys-Gly) (interchain with G-Cter in SUMO2) cross-link. The interval lysine 433–isoleucine 754 is disordered. Phosphoserine is present on residues serine 445, serine 452, and serine 453. Residues cysteine 462–phenylalanine 476 show a composition bias toward basic and acidic residues. Residues serine 481, serine 485, serine 494, serine 498, serine 521, and serine 529 each carry the phosphoserine modification. A compositionally biased stretch (basic and acidic residues) spans leucine 508–glutamate 538. The segment covering serine 539 to cysteine 552 has biased composition (acidic residues). Residues serine 553–arginine 563 show a composition bias toward basic and acidic residues. 3 positions are modified to phosphoserine: serine 557, serine 561, and serine 579. Residues glutamate 564–serine 579 are compositionally biased toward acidic residues. The segment covering glutamate 580 to lysine 590 has biased composition (basic and acidic residues). The segment covering glutamate 591–glycine 606 has biased composition (acidic residues). Residues serine 597, serine 600, serine 607, serine 616, and serine 624 each carry the phosphoserine modification. Acidic residues-rich tracts occupy residues glutamate 613 to threonine 633 and aspartate 640 to alanine 651. Threonine 633 bears the Phosphothreonine mark. Serine 642 carries the post-translational modification Phosphoserine. The segment covering aspartate 652 to glutamate 674 has biased composition (basic and acidic residues). Over residues glutamate 675–serine 713 the composition is skewed to acidic residues. Serine 676, serine 702, serine 713, serine 721, and serine 748 each carry phosphoserine. The span at asparagine 714–glycine 725 shows a compositional bias: basic and acidic residues.

It belongs to the HTATSF1 family. In terms of assembly, component of the 17S U2 SnRNP complex, a ribonucleoprotein complex that contains small nuclear RNA (snRNA) U2 and a number of specific proteins. Within the 17S U2 SnRNP complex, interacts (via UHM region) directly with SF3B1. Component of a complex which is at least composed of HTATSF1/Tat-SF1, the P-TEFb complex components CDK9 and CCNT1, RNA polymerase II, SUPT5H, and NCL/nucleolin. Interacts with GTF2F2/RAP30 and POLR2A. Interacts with TCERG1/CA150. Interacts with (poly-ADP-ribosylated) RPA1; promoting HTATSF1 recruitment to DNA damage sites. Interacts (when phosphorylated) with TOPBP1; promoting recruitment of TOPBP1 to DNA damage sites during S-phase. Post-translationally, phosphorylation at Ser-748 by CK2 during S-phase in response to DNA damage promotes interaction with TOPBP1 and double-strand break (DSB) repair via homologous recombination.

The protein localises to the nucleus. The protein resides in the chromosome. Component of the 17S U2 SnRNP complex of the spliceosome, a large ribonucleoprotein complex that removes introns from transcribed pre-mRNAs. The 17S U2 SnRNP complex (1) directly participates in early spliceosome assembly and (2) mediates recognition of the intron branch site during pre-mRNA splicing by promoting the selection of the pre-mRNA branch-site adenosine, the nucleophile for the first step of splicing. Within the 17S U2 SnRNP complex, HTATSF1 is required to stabilize the branchpoint-interacting stem loop. HTATSF1 is displaced from the 17S U2 SnRNP complex before the stable addition of the 17S U2 SnRNP complex to the spliceosome, destabilizing the branchpoint-interacting stem loop and allowing to probe intron branch site sequences. Also acts as a regulator of transcriptional elongation, possibly by mediating the reciprocal stimulatory effect of splicing on transcriptional elongation. Involved in double-strand break (DSB) repair via homologous recombination in S-phase by promoting the recruitment of TOPBP1 to DNA damage sites. Mechanistically, HTATSF1 is (1) recruited to DNA damage sites in S-phase via interaction with poly-ADP-ribosylated RPA1 and (2) phosphorylated by CK2, promoting recruitment of TOPBP1, thereby facilitating RAD51 nucleofilaments formation and RPA displacement, followed by homologous recombination. This is 17S U2 SnRNP complex component HTATSF1 (HTATSF1) from Pongo abelii (Sumatran orangutan).